The chain runs to 484 residues: MKILFVASEVTPFAKSGGLADVTGALPKSLKKQGHDVRIILPFYSEVERGGYGIRKGRKSVDVMIGGSVKRGLFRHTNLEDIPVYLLENKEYFSRDHLYGTASGEYPDNHLRFAFFCRGVLDLLKKMDYRPDIIHCHDWQTAMIPLILKKEKGDDLFFSKTGTVFTIHNLAYQGLFPKEAMVDMGLDPSLFTIDCLEYYGKVNLIKGAILTADVINTVSETYCREILTPESGDGLDGVLTLRKNDLYGVLNGIDYEHWNPATDRGISKNFTPGAPAGKAANKKALQKRLGLEIAEDIPLVGMVSRLTEQKGLDLLEALLPRIAKAKLQLVLLGTGDEKYLKLLQEFAALGTDNVSVNIGFHPELAPQIYAGSDIFLMPSRYEPCGLGQMIALRYGAVPVVRKTGGLADTIFDERDQPKEPNGFSFDEYTPEALWEALSRAVEAYSDKAAWKKMMKRGMAGDFSWNTSALKYEELYRLVLAKKGR.

ADP-alpha-D-glucose is bound at residue Lys-15.

The protein belongs to the glycosyltransferase 1 family. Bacterial/plant glycogen synthase subfamily.

It carries out the reaction [(1-&gt;4)-alpha-D-glucosyl](n) + ADP-alpha-D-glucose = [(1-&gt;4)-alpha-D-glucosyl](n+1) + ADP + H(+). Its pathway is glycan biosynthesis; glycogen biosynthesis. Functionally, synthesizes alpha-1,4-glucan chains using ADP-glucose. This is Glycogen synthase from Geotalea daltonii (strain DSM 22248 / JCM 15807 / FRC-32) (Geobacter daltonii).